The chain runs to 192 residues: uncharacterized protein (192 aa).

A Nudix hydrolase domain is found at Gln-29–His-160. The Nudix box signature appears at Gly-67–Ala-89. Glu-83 and Glu-87 together coordinate Mg(2+).

This sequence belongs to the Nudix hydrolase family. PCD1 subfamily. Requires Mn(2+) as cofactor. The cofactor is Mg(2+).

Its function is as follows. Probably mediates the hydrolysis of some nucleoside diphosphate derivatives. This is an uncharacterized protein from Cronobacter sakazakii (strain ATCC BAA-894) (Enterobacter sakazakii).